We begin with the raw amino-acid sequence, 297 residues long: Homoserine kinase (297 aa).

ATP is bound at residue 82–92; it reads PVSRGLGSSAA.

The protein belongs to the GHMP kinase family. Homoserine kinase subfamily.

It localises to the cytoplasm. It carries out the reaction L-homoserine + ATP = O-phospho-L-homoserine + ADP + H(+). Its pathway is amino-acid biosynthesis; L-threonine biosynthesis; L-threonine from L-aspartate: step 4/5. Functionally, catalyzes the ATP-dependent phosphorylation of L-homoserine to L-homoserine phosphate. The chain is Homoserine kinase from Clostridium botulinum (strain 657 / Type Ba4).